Here is a 177-residue protein sequence, read N- to C-terminus: UBA-like domain-containing protein 1 (177 aa).

The tract at residues 89 to 177 (ESFHSGGSGS…RAHPAMEAER (89 aa)) is disordered. Over residues 112–138 (PHAATSSSAASSWPTAASPPGGPQHHQ) the composition is skewed to low complexity. The span at 139–151 (PQPPLWTPTPPSP) shows a compositional bias: pro residues. Positions 167 to 177 (PRAHPAMEAER) are enriched in basic and acidic residues.

It belongs to the UBALD family.

The sequence is that of UBA-like domain-containing protein 1 (UBALD1) from Homo sapiens (Human).